A 153-amino-acid chain; its full sequence is MFCTWDSWDTGTSRKSHSPHRNCLAVRFLQLPFSSFLPCVITYMKSWQTSIGDSEFPLTSFQILVTDAEVVVQRIFDCINGYLPGWHYRNTVFIEHTTSYHRSHFCIFVEGVWVCGEFVKKWFEIPFDNRIENYTKQFPWILIGFGNQVSKAL.

Functionally, involved in bud site selection. Required for resistance to the DNA-damaging agent methyl methanesulfonate (MMS). This chain is Bud site selection protein 25, found in Saccharomyces cerevisiae (strain ATCC 204508 / S288c) (Baker's yeast).